The primary structure comprises 606 residues: Membrane protein insertase YidC (606 aa).

A helical transmembrane segment spans residues 8–28; that stretch reads LILATALSFIVILVWFVLFPP. Positions 33-59 are disordered; it reads MPLTGETSTELTPDAATGSLPSVTSDT. 6 helical membrane-spanning segments follow: residues 116 to 136, 348 to 368, 374 to 394, 448 to 468, 506 to 526, and 542 to 562; these read IVTMLSPVGSPGAYYALYGWA, FIDSIDWGWFFFLTKPIFFLL, FIGNMGWAIIGLTLIIKAILL, LPILLQIPIFFSLYKVIFVTI, SIMALIFIGILPLLLGISMWL, and IFAWMPWVFMFMLGGFASGLV.

This sequence belongs to the OXA1/ALB3/YidC family. Type 1 subfamily. As to quaternary structure, interacts with the Sec translocase complex via SecD. Specifically interacts with transmembrane segments of nascent integral membrane proteins during membrane integration.

The protein resides in the cell inner membrane. Its function is as follows. Required for the insertion and/or proper folding and/or complex formation of integral membrane proteins into the membrane. Involved in integration of membrane proteins that insert both dependently and independently of the Sec translocase complex, as well as at least some lipoproteins. Aids folding of multispanning membrane proteins. The sequence is that of Membrane protein insertase YidC from Roseobacter denitrificans (strain ATCC 33942 / OCh 114) (Erythrobacter sp. (strain OCh 114)).